The primary structure comprises 387 residues: MTVLKMTDLDLQGKRVLIREDLNVPVKDGVVASDARILAALPTIKLALEKGAAVMVCSHLGRPTEGEFSAENSLKPVADYLSKALGRDVPLVADYLDGVAVQAGELVLFENVRFNKGEKKNADELAQKYAALCDVFVMDAFGTAHRAEGSTHGVAKFAKVAAAGPLLAAELDALGKALKAPAKPMAAIVAGSKVSTKLDVLNSLSSVCDQLIVGGGIANTFLAAAGHPVGKSLYEPDLVDTAKAIAAKVSVPLPVDVVVAKEFAETAEATVKAIADVAADDMILDIGPQTAANFAELLKSSKTILWNGPVGVFEFDQFGNGTKVLAKAIADSAAFSIAGGGDTLAAIDKYGVSKEISYISTGGGAFLEFVEGKVLPAVAILEERAKA.

Substrate contacts are provided by residues 21-23 (DLN), arginine 36, 59-62 (HLGR), arginine 113, and arginine 146. ATP-binding positions include lysine 197, glutamate 314, and 340-343 (GGDT).

The protein belongs to the phosphoglycerate kinase family. Monomer.

The protein localises to the cytoplasm. It catalyses the reaction (2R)-3-phosphoglycerate + ATP = (2R)-3-phospho-glyceroyl phosphate + ADP. It functions in the pathway carbohydrate degradation; glycolysis; pyruvate from D-glyceraldehyde 3-phosphate: step 2/5. The protein is Phosphoglycerate kinase of Pseudomonas putida (strain ATCC 700007 / DSM 6899 / JCM 31910 / BCRC 17059 / LMG 24140 / F1).